Consider the following 240-residue polypeptide: Mannose-binding protein C (240 aa).

Positions 1–18 (MSLFPSLHLLLLIVMTAS) are cleaved as a signal peptide. 2 Collagen-like domains span residues 39–61 (SPGI…KGEP) and 67–97 (GLQG…GDSG). The residue at position 46 (Pro-46) is a Hydroxyproline. A disordered region spans residues 48–102 (KDGLDGAKGEKGEPGQGLIGLQGLPGMVGPQGSPGIPGLPGLKGQKGDSGIDPGN). Over residues 49 to 60 (DGLDGAKGEKGE) the composition is skewed to basic and acidic residues. 3 positions are modified to hydroxyproline: Pro-72, Pro-81, and Pro-87. Residues 104–122 (LANLRSELDNIKKWLIFAQ) are a coiled coil. Residues 126–237 (VGKKLYLTNG…CSSQLSAVCE (112 aa)) enclose the C-type lectin domain. 2 cysteine pairs are disulfide-bonded: Cys-147-Cys-236 and Cys-214-Cys-228.

Interacts with MASP1 and MASP2. Interacts with MEP1A and MEP1B and may inhibit their catalytic activity. Forms oligomeric complexes of 2 or 3 homotrimers. Expressed in liver. Weakly expressed in kidney and testis.

Its subcellular location is the secreted. In terms of biological role, calcium-dependent lectin involved in innate immune defense. Binds mannose, fucose and N-acetylglucosamine on different microorganisms and activates the lectin complement pathway. Binds to late apoptotic cells, as well as to apoptotic blebs and to necrotic cells, but not to early apoptotic cells, facilitating their uptake by macrophages. According to some authors, it only binds mannose. The sequence is that of Mannose-binding protein C from Sus scrofa (Pig).